The sequence spans 517 residues: Cytochrome P450 CYP72A616 (517 aa).

The chain crosses the membrane as a helical span at residues 5-25; that stretch reads VLGALAALLAAAAAWVMRAAA. Cysteine 465 provides a ligand contact to heme.

This sequence belongs to the cytochrome P450 family. In terms of tissue distribution, mainly expressed in leaves and, at low levels, in roots, fruits and stems.

The protein localises to the membrane. Its pathway is steroid metabolism; cholesterol metabolism. Its function is as follows. Involved in the biosynthesis of spiroketal steroid and saponin natural products from cholesterol such as diosgenin and analogs (e.g. furostanol and spirostanol), plant defense compounds used as main precursors for the industrial production of steroid hormones. During the 5,6-spiroketalization of cholesterol, may catalyze the 27-monohydroxylation of furostanol-type steroid to an intermediate product that undergoes a stereospecific formation of the terminal heterocycle to yield diosgenin. The protein is Cytochrome P450 CYP72A616 of Paris polyphylla (Daiswa polyphylla).